The sequence spans 591 residues: Transcription factor COE1-A (591 aa).

The segment at 63-66 (RKSN) is interaction with DNA. The segment at 151–170 (CRVLLTHEIMCSRCCDKKSC) adopts a C5-type zinc-finger fold. Interaction with DNA regions lie at residues 197–204 (NCLKNAGN) and 236–239 (NNSK). The region spanning 262 to 344 (PCIKAISPSE…CKGTPGRFIY (83 aa)) is the IPT/TIG domain. A compositionally biased stretch (polar residues) spans 454–466 (ANQGFSRNTSSVS). The segment at 454-484 (ANQGFSRNTSSVSPHGYVPSTTPQQSSYSTV) is disordered. Positions 471–484 (VPSTTPQQSSYSTV) are enriched in low complexity.

Belongs to the COE family. Forms either a homodimer or a heterodimer with a related family member. Detected in B cells.

It localises to the nucleus. In terms of biological role, transcriptional activator. This chain is Transcription factor COE1-A, found in Danio rerio (Zebrafish).